Consider the following 252-residue polypeptide: D-aminoacyl-tRNA deacylase (252 aa).

Belongs to the DtdA deacylase family. Monomer. Zn(2+) is required as a cofactor.

It carries out the reaction a D-aminoacyl-tRNA + H2O = a tRNA + a D-alpha-amino acid + H(+). It catalyses the reaction glycyl-tRNA(Ala) + H2O = tRNA(Ala) + glycine + H(+). In terms of biological role, D-aminoacyl-tRNA deacylase with broad substrate specificity. By recycling D-aminoacyl-tRNA to D-amino acids and free tRNA molecules, this enzyme counteracts the toxicity associated with the formation of D-aminoacyl-tRNA entities in vivo. The chain is D-aminoacyl-tRNA deacylase from Pyrobaculum islandicum (strain DSM 4184 / JCM 9189 / GEO3).